The following is a 324-amino-acid chain: HTH-type transcriptional regulator GlxA (324 aa).

Positions 223–321 constitute an HTH araC/xylS-type domain; the sequence is LAVLEKMETA…SQTPGSLRRR (99 aa). 2 DNA-binding regions (H-T-H motif) span residues 240–261 and 288–311; these read TAMA…REHR and IPEI…KRLF.

This is HTH-type transcriptional regulator GlxA (glxA) from Rhizobium meliloti (strain 1021) (Ensifer meliloti).